Reading from the N-terminus, the 367-residue chain is Phosphoribosylaminoimidazole-succinocarboxamide synthase (367 aa).

The protein belongs to the SAICAR synthetase family.

The enzyme catalyses 5-amino-1-(5-phospho-D-ribosyl)imidazole-4-carboxylate + L-aspartate + ATP = (2S)-2-[5-amino-1-(5-phospho-beta-D-ribosyl)imidazole-4-carboxamido]succinate + ADP + phosphate + 2 H(+). It participates in purine metabolism; IMP biosynthesis via de novo pathway; 5-amino-1-(5-phospho-D-ribosyl)imidazole-4-carboxamide from 5-amino-1-(5-phospho-D-ribosyl)imidazole-4-carboxylate: step 1/2. This Aliivibrio fischeri (strain MJ11) (Vibrio fischeri) protein is Phosphoribosylaminoimidazole-succinocarboxamide synthase.